Consider the following 365-residue polypeptide: tRNA/tmRNA (uracil-C(5))-methyltransferase (365 aa).

S-adenosyl-L-methionine-binding residues include Gln-189, Tyr-217, Asn-222, Glu-238, and Asp-298. Residue Cys-323 is the Nucleophile of the active site. Catalysis depends on Glu-357, which acts as the Proton acceptor.

The protein belongs to the class I-like SAM-binding methyltransferase superfamily. RNA M5U methyltransferase family. TrmA subfamily.

It catalyses the reaction uridine(54) in tRNA + S-adenosyl-L-methionine = 5-methyluridine(54) in tRNA + S-adenosyl-L-homocysteine + H(+). The enzyme catalyses uridine(341) in tmRNA + S-adenosyl-L-methionine = 5-methyluridine(341) in tmRNA + S-adenosyl-L-homocysteine + H(+). Functionally, dual-specificity methyltransferase that catalyzes the formation of 5-methyluridine at position 54 (m5U54) in all tRNAs, and that of position 341 (m5U341) in tmRNA (transfer-mRNA). In Shewanella piezotolerans (strain WP3 / JCM 13877), this protein is tRNA/tmRNA (uracil-C(5))-methyltransferase.